The following is a 220-amino-acid chain: MPGPADEHLQRMRVEYGSVEKDGSPDLDVDWLDDGWVALLRKWIDDAERAGVAEPNAMVLATVTPDGRPASRTVLCKSLDETGITFFTNYDSAKADDLAATPYAAVTFPWYQLGRQVHLRGPVSKVTAQVTEDYWSKRPRGSQLGAWASQQSRPIASRAALLEQLAQVTARFADHERVPVPPGWGGYLIAADVVEFWQGRENRLHNRIRVTGDRVERLQP.

Substrate-binding positions include 13–16 and Lys-77; that span reads RVEY. FMN is bound by residues 72 to 77, 87 to 88, Lys-94, and Gln-116; these read RTVLCK and FT. Tyr-134, Arg-138, and Ser-142 together coordinate substrate. Residues 151-152 and Trp-197 each bind FMN; that span reads QS. 203-205 is a binding site for substrate; it reads RLH. Arg-207 is an FMN binding site.

Belongs to the pyridoxamine 5'-phosphate oxidase family. In terms of assembly, homodimer. FMN is required as a cofactor.

The enzyme catalyses pyridoxamine 5'-phosphate + O2 + H2O = pyridoxal 5'-phosphate + H2O2 + NH4(+). The catalysed reaction is pyridoxine 5'-phosphate + O2 = pyridoxal 5'-phosphate + H2O2. Its pathway is cofactor metabolism; pyridoxal 5'-phosphate salvage; pyridoxal 5'-phosphate from pyridoxamine 5'-phosphate: step 1/1. It participates in cofactor metabolism; pyridoxal 5'-phosphate salvage; pyridoxal 5'-phosphate from pyridoxine 5'-phosphate: step 1/1. Its function is as follows. Catalyzes the oxidation of either pyridoxine 5'-phosphate (PNP) or pyridoxamine 5'-phosphate (PMP) into pyridoxal 5'-phosphate (PLP). This chain is Pyridoxine/pyridoxamine 5'-phosphate oxidase, found in Mycolicibacterium paratuberculosis (strain ATCC BAA-968 / K-10) (Mycobacterium paratuberculosis).